A 487-amino-acid polypeptide reads, in one-letter code: Diacylglycerol kinase 4 (487 aa).

Positions 86–242 (TPEVPLMVFV…LDSWNILITM (157 aa)) constitute a DAGKc domain.

Belongs to the eukaryotic diacylglycerol kinase family. Monomer. Highly expressed in pollen grains. Expressed in roots, hypocotyls, leaf vasculature, developing anthers and stigmas, and receptacles of siliques.

It localises to the endoplasmic reticulum. It is found in the cytoplasm. The protein localises to the cytosol. The catalysed reaction is a 1,2-diacyl-sn-glycerol + ATP = a 1,2-diacyl-sn-glycero-3-phosphate + ADP + H(+). Functionally, phosphorylates the second messenger diacylglycerol (DAG) to generate phosphatidic acid (PA), another important signaling molecule. PA is required for plant development and responses to abiotic stress and pathogen attack. May be involved in the accumulation of PA during cold stress. Involved in the regulation of PA and phosphatidylcholine biosynthesis in growing pollen tubes. Required for nitric oxide-dependent pollen tube growth and re-orientation responses. Functions together with DGK2 in male gametophyte development and biosynthesis of phosphatidylglycerol and phosphatidylinositol in the endoplasmic reticulum (ER). Involved in PA production for pollen grain growth, as well as leaf and root growth. Possesses guanylyl cyclase activity in vitro. The polypeptide is Diacylglycerol kinase 4 (Arabidopsis thaliana (Mouse-ear cress)).